Here is a 489-residue protein sequence, read N- to C-terminus: MILFTRLLAVSLLLVSGAFAKFQEFDDSDDVAEYDDNDFAEFEDAADEAPTLRPPSQQVPEKEDEIEDDDEEEEEATVELEGQEEFEEDTEGQEGDADAEPYDDEEFENYDDRLDTGTPNKNNDPITIVDVPAHLQNSWESYYMEILMVTGLLAYIMNYIIGKNKNSRLAQAWFNSHRELLESNFSLVGDDGMNKDAVSTGMLNQENDHIYNMWCSGRLCCEGMLIQLKFIKRQDLLNVLSRMMRPVCDQVQIKVTMNDEDMDTYVFSVGTRKTLIRLQKEMQDLSEFCGDKPKSAAKMGLPESMAVLAEMGEVTDGIMDTKMVHYLTNYSDKIESIHFSDQFSGPKIMQEEGQPLKLPETKKTLLFTFNVPGSGNASVKDMEALLPLMNMVIYSIDKVKKFRLNREGKQKADKNRARVEENFLKITHVQRQEAAQTRREEKKRAEKERIMNEEDPEKQRRLEEAAQRREQKKIEKKQMKMKQIKVKAM.

The signal sequence occupies residues 1–20; the sequence is MILFTRLLAVSLLLVSGAFA. Residues 21 to 141 are Cytoplasmic-facing; the sequence is KFQEFDDSDD…PAHLQNSWES (121 aa). Acidic residues-rich tracts occupy residues 33–47 and 62–103; these read EYDDNDFAEFEDAAD and KEDE…EPYD. Residues 33–103 form a disordered region; sequence EYDDNDFAEF…EGDADAEPYD (71 aa). A helical transmembrane segment spans residues 142–162; that stretch reads YYMEILMVTGLLAYIMNYIIG. Residues 163-489 lie on the Lumenal side of the membrane; it reads KNKNSRLAQA…KMKQIKVKAM (327 aa). Positions 428 to 489 form a coiled coil; it reads HVQRQEAAQT…KMKQIKVKAM (62 aa). The interval 430 to 489 is disordered; that stretch reads QRQEAAQTRREEKKRAEKERIMNEEDPEKQRRLEEAAQRREQKKIEKKQMKMKQIKVKAM. The segment covering 436-478 has biased composition (basic and acidic residues); sequence QTRREEKKRAEKERIMNEEDPEKQRRLEEAAQRREQKKIEKKQ. A compositionally biased stretch (basic residues) spans 479 to 489; sequence MKMKQIKVKAM.

It belongs to the CCDC47 family. In terms of assembly, component of the multi-pass translocon (MPT) complex.

Its subcellular location is the endoplasmic reticulum membrane. It localises to the rough endoplasmic reticulum membrane. Functionally, component of the multi-pass translocon (MPT) complex that mediates insertion of multi-pass membrane proteins into the lipid bilayer of membranes. The MPT complex takes over after the SEC61 complex: following membrane insertion of the first few transmembrane segments of proteins by the SEC61 complex, the MPT complex occludes the lateral gate of the SEC61 complex to promote insertion of subsequent transmembrane regions. This Xenopus laevis (African clawed frog) protein is PAT complex subunit CCDC47 (ccdc47).